The sequence spans 526 residues: Medium/long-chain-fatty-acid--[acyl-carrier-protein] ligase MbtM (526 aa).

An N6-acetyllysine; by Pat mark is found at Lys-260 and Lys-511.

The protein belongs to the ATP-dependent AMP-binding enzyme family. In terms of processing, acetylated on Lys-511 and Lys-260 by Pat. Lys-511 is the major acetylation site. Acetylation results in the inactivation of the enzyme.

The catalysed reaction is a long-chain fatty acid + holo-[ACP] + ATP = a long-chain fatty acyl-[ACP] + AMP + diphosphate. It carries out the reaction a medium-chain fatty acid + holo-[ACP] + ATP = a medium-chain fatty acyl-[ACP] + AMP + diphosphate. The enzyme catalyses hexadecanoate + holo-[ACP] + ATP = hexadecanoyl-[ACP] + AMP + diphosphate. It catalyses the reaction hexadecanoate + ATP + H(+) = hexadecanoyl-AMP + diphosphate. The catalysed reaction is hexadecanoyl-AMP + holo-[ACP] = hexadecanoyl-[ACP] + AMP + H(+). It carries out the reaction dodecanoate + holo-[ACP] + ATP = dodecanoyl-[ACP] + AMP + diphosphate. The enzyme catalyses dodecanoate + ATP + H(+) = dodecanoyl-AMP + diphosphate. It catalyses the reaction dodecanoyl-AMP + holo-[ACP] = dodecanoyl-[ACP] + AMP + H(+). It participates in siderophore biosynthesis; mycobactin biosynthesis. Reversibly inactivated by post-translational acetylation by Pat in a cAMP-dependent manner and reactivated by Sir2 deacylase. Activates lipidic moieties required for mycobactin biosynthesis. Converts medium- to long-chain aliphatic fatty acids into acyl adenylate, which is further transferred on to the phosphopantetheine arm of the carrier protein MbtL. Shows a strong preference for palmitic acid (C16) and cannot use short-chain fatty acids. Proceeds via a Bi Uni Uni Bi ping-pong mechanism. During the first half-reaction (adenylation), fatty acid binds first to the free enzyme, followed by ATP and the release of pyrophosphate to form the adenylate intermediate. During the second half-reaction (ligation), holo-MbtL binds to the enzyme followed by the release of products AMP and acylated MbtL. The chain is Medium/long-chain-fatty-acid--[acyl-carrier-protein] ligase MbtM from Mycolicibacterium smegmatis (strain ATCC 700084 / mc(2)155) (Mycobacterium smegmatis).